Reading from the N-terminus, the 214-residue chain is Probable nicotinate-nucleotide adenylyltransferase (214 aa).

It belongs to the NadD family.

The catalysed reaction is nicotinate beta-D-ribonucleotide + ATP + H(+) = deamido-NAD(+) + diphosphate. It functions in the pathway cofactor biosynthesis; NAD(+) biosynthesis; deamido-NAD(+) from nicotinate D-ribonucleotide: step 1/1. Functionally, catalyzes the reversible adenylation of nicotinate mononucleotide (NaMN) to nicotinic acid adenine dinucleotide (NaAD). The sequence is that of Probable nicotinate-nucleotide adenylyltransferase from Aeromonas salmonicida (strain A449).